A 372-amino-acid polypeptide reads, in one-letter code: Queuine tRNA-ribosyltransferase (372 aa).

The active-site Proton acceptor is D93. Residues 93 to 97, D147, Q190, and G217 each bind substrate; that span reads DSGGF. The segment at 248-254 is RNA binding; the sequence is GVGSPDC. Catalysis depends on D267, which acts as the Nucleophile. An RNA binding; important for wobble base 34 recognition region spans residues 272 to 276; the sequence is TRMAR. Positions 305, 307, 310, and 336 each coordinate Zn(2+).

The protein belongs to the queuine tRNA-ribosyltransferase family. Homodimer. Within each dimer, one monomer is responsible for RNA recognition and catalysis, while the other monomer binds to the replacement base PreQ1. Zn(2+) serves as cofactor.

It carries out the reaction 7-aminomethyl-7-carbaguanine + guanosine(34) in tRNA = 7-aminomethyl-7-carbaguanosine(34) in tRNA + guanine. It functions in the pathway tRNA modification; tRNA-queuosine biosynthesis. Catalyzes the base-exchange of a guanine (G) residue with the queuine precursor 7-aminomethyl-7-deazaguanine (PreQ1) at position 34 (anticodon wobble position) in tRNAs with GU(N) anticodons (tRNA-Asp, -Asn, -His and -Tyr). Catalysis occurs through a double-displacement mechanism. The nucleophile active site attacks the C1' of nucleotide 34 to detach the guanine base from the RNA, forming a covalent enzyme-RNA intermediate. The proton acceptor active site deprotonates the incoming PreQ1, allowing a nucleophilic attack on the C1' of the ribose to form the product. After dissociation, two additional enzymatic reactions on the tRNA convert PreQ1 to queuine (Q), resulting in the hypermodified nucleoside queuosine (7-(((4,5-cis-dihydroxy-2-cyclopenten-1-yl)amino)methyl)-7-deazaguanosine). This chain is Queuine tRNA-ribosyltransferase, found in Desulforudis audaxviator (strain MP104C).